The sequence spans 421 residues: 4-hydroxy-3-methylbut-2-en-1-yl diphosphate synthase (flavodoxin) (421 aa).

Cysteine 298, cysteine 301, cysteine 344, and glutamate 351 together coordinate [4Fe-4S] cluster.

It belongs to the IspG family. [4Fe-4S] cluster serves as cofactor.

The enzyme catalyses (2E)-4-hydroxy-3-methylbut-2-enyl diphosphate + oxidized [flavodoxin] + H2O + 2 H(+) = 2-C-methyl-D-erythritol 2,4-cyclic diphosphate + reduced [flavodoxin]. The protein operates within isoprenoid biosynthesis; isopentenyl diphosphate biosynthesis via DXP pathway; isopentenyl diphosphate from 1-deoxy-D-xylulose 5-phosphate: step 5/6. Converts 2C-methyl-D-erythritol 2,4-cyclodiphosphate (ME-2,4cPP) into 1-hydroxy-2-methyl-2-(E)-butenyl 4-diphosphate. The sequence is that of 4-hydroxy-3-methylbut-2-en-1-yl diphosphate synthase (flavodoxin) from Neisseria meningitidis serogroup B (strain ATCC BAA-335 / MC58).